The primary structure comprises 507 residues: Maturase K (507 aa).

Belongs to the intron maturase 2 family. MatK subfamily.

Its subcellular location is the plastid. The protein localises to the chloroplast. In terms of biological role, usually encoded in the trnK tRNA gene intron. Probably assists in splicing its own and other chloroplast group II introns. This is Maturase K from Lyonia ferruginea (Rusty staggerbush).